Here is a 295-residue protein sequence, read N- to C-terminus: HTH-type transcriptional regulator TrpI (295 aa).

The 58-residue stretch at 6 to 63 (PSLNALRAFEAAARLHSISLAAEELHVTHGAVSRQVRLLEDDLGVALFGKDGRGVKLT) folds into the HTH lysR-type domain. A DNA-binding region (H-T-H motif) is located at residues 23–42 (ISLAAEELHVTHGAVSRQVR).

This sequence belongs to the LysR transcriptional regulatory family. As to quaternary structure, homotetramer.

Activates the expression of the trpBA genes, which encode the two tryptophan synthase subunits, and represses initiation at its own promoter. Acts by binding to two adjacent sites in the intergenic region. In the absence of the inducer indoleglycerol phosphate (InGP), TrpI binds to site I. In the presence of InGP, TrpI binds to site I and site II. Binding to site II is site I dependent. InGP strongly stimulates binding to site II and is required for maximal activation of trpBA. This Pseudomonas aeruginosa (strain ATCC 15692 / DSM 22644 / CIP 104116 / JCM 14847 / LMG 12228 / 1C / PRS 101 / PAO1) protein is HTH-type transcriptional regulator TrpI.